A 129-amino-acid polypeptide reads, in one-letter code: Small ribosomal subunit protein uS11 (129 aa).

It belongs to the universal ribosomal protein uS11 family. Part of the 30S ribosomal subunit. Interacts with proteins S7 and S18. Binds to IF-3.

Its function is as follows. Located on the platform of the 30S subunit, it bridges several disparate RNA helices of the 16S rRNA. Forms part of the Shine-Dalgarno cleft in the 70S ribosome. The sequence is that of Small ribosomal subunit protein uS11 from Xanthobacter autotrophicus (strain ATCC BAA-1158 / Py2).